A 228-amino-acid chain; its full sequence is Biosynthetic peptidoglycan transglycosylase (228 aa).

The helical transmembrane segment at 8–28 (ILAALVAAFLLYNLWVLGHII) threads the bilayer.

Belongs to the glycosyltransferase 51 family.

Its subcellular location is the cell inner membrane. The enzyme catalyses [GlcNAc-(1-&gt;4)-Mur2Ac(oyl-L-Ala-gamma-D-Glu-L-Lys-D-Ala-D-Ala)](n)-di-trans,octa-cis-undecaprenyl diphosphate + beta-D-GlcNAc-(1-&gt;4)-Mur2Ac(oyl-L-Ala-gamma-D-Glu-L-Lys-D-Ala-D-Ala)-di-trans,octa-cis-undecaprenyl diphosphate = [GlcNAc-(1-&gt;4)-Mur2Ac(oyl-L-Ala-gamma-D-Glu-L-Lys-D-Ala-D-Ala)](n+1)-di-trans,octa-cis-undecaprenyl diphosphate + di-trans,octa-cis-undecaprenyl diphosphate + H(+). The protein operates within cell wall biogenesis; peptidoglycan biosynthesis. Functionally, peptidoglycan polymerase that catalyzes glycan chain elongation from lipid-linked precursors. The protein is Biosynthetic peptidoglycan transglycosylase of Chromobacterium violaceum (strain ATCC 12472 / DSM 30191 / JCM 1249 / CCUG 213 / NBRC 12614 / NCIMB 9131 / NCTC 9757 / MK).